We begin with the raw amino-acid sequence, 215 residues long: Probable glutathione S-transferase GSTF2 (215 aa).

Positions 2–83 (APMKLYGSTL…YVCRKNKPEL (82 aa)) constitute a GST N-terminal domain. Residues Ser-12, 41 to 42 (HK), 54 to 55 (QV), and 67 to 68 (ES) contribute to the glutathione site. Residues 88–215 (DLKESAMVDV…KVASLMKPPA (128 aa)) enclose the GST C-terminal domain.

This sequence belongs to the GST superfamily. Phi family. Constitutively expressed in roots. Expressed in anthers, callus, panicles, sheaths and stems (at protein level).

It carries out the reaction RX + glutathione = an S-substituted glutathione + a halide anion + H(+). Conjugation of reduced glutathione to a wide number of exogenous and endogenous hydrophobic electrophiles. The protein is Probable glutathione S-transferase GSTF2 (GSTF2) of Oryza sativa subsp. japonica (Rice).